Here is a 374-residue protein sequence, read N- to C-terminus: Protein-glutamate methylesterase/protein-glutamine glutaminase 1 (374 aa).

The 118-residue stretch at 4–121 (KVLVVDDSSF…ATNKDEAILL (118 aa)) folds into the Response regulatory domain. D55 carries the 4-aspartylphosphate modification. The disordered stretch occupies residues 141–170 (PSVAPVTPRPTTGSAVGNATTPVQSASAPV). Residues 149-167 (RPTTGSAVGNATTPVQSAS) show a composition bias toward polar residues. Residues 174–374 (PLSSIRASGK…ESILKESARG (201 aa)) enclose the CheB-type methylesterase domain. Residues S193, H220, and D316 contribute to the active site.

This sequence belongs to the CheB family. Phosphorylated by CheA. Phosphorylation of the N-terminal regulatory domain activates the methylesterase activity.

It is found in the cytoplasm. It carries out the reaction [protein]-L-glutamate 5-O-methyl ester + H2O = L-glutamyl-[protein] + methanol + H(+). The catalysed reaction is L-glutaminyl-[protein] + H2O = L-glutamyl-[protein] + NH4(+). Its function is as follows. Involved in chemotaxis. Part of a chemotaxis signal transduction system that modulates chemotaxis in response to various stimuli. Catalyzes the demethylation of specific methylglutamate residues introduced into the chemoreceptors (methyl-accepting chemotaxis proteins or MCP) by CheR. Also mediates the irreversible deamidation of specific glutamine residues to glutamic acid. This is Protein-glutamate methylesterase/protein-glutamine glutaminase 1 from Shewanella oneidensis (strain ATCC 700550 / JCM 31522 / CIP 106686 / LMG 19005 / NCIMB 14063 / MR-1).